The following is a 291-amino-acid chain: Putative phosphatase MG263 (291 aa).

The active-site Nucleophile is the Asp11. Asp11 is a Mg(2+) binding site. Leu12 contacts phosphate. Residue Asp13 coordinates Mg(2+). Phosphate is bound by residues 60-61 (TG) and Lys217. Mg(2+) is bound at residue Asp241. A phosphate-binding site is contributed by Asn244.

Belongs to the HAD-like hydrolase superfamily. Cof family. It depends on Mg(2+) as a cofactor.

The sequence is that of Putative phosphatase MG263 from Mycoplasma genitalium (strain ATCC 33530 / DSM 19775 / NCTC 10195 / G37) (Mycoplasmoides genitalium).